A 22-amino-acid polypeptide reads, in one-letter code: Large ribosomal subunit protein bL32 (22 aa).

A disordered region spans residues C1–E22. Over residues D13–E22 the composition is skewed to low complexity.

This sequence belongs to the bacterial ribosomal protein bL32 family.

The sequence is that of Large ribosomal subunit protein bL32 (rpmF) from Ectopseudomonas mendocina (Pseudomonas mendocina).